A 293-amino-acid chain; its full sequence is Mycothiol S-conjugate amidase (293 aa).

Residues His-13, Asp-16, and His-144 each contribute to the Zn(2+) site.

It belongs to the MshB deacetylase family. Mca subfamily. In terms of assembly, monomer. Zn(2+) is required as a cofactor.

It carries out the reaction mycothiol S-conjugate + H2O = an N-acetyl-L-cysteine-S-conjugate + 1D-myo-inositol 2-amino-2-deoxy-alpha-D-glucopyranoside. In terms of biological role, a mycothiol (MSH, N-acetylcysteinyl-glucosaminyl-inositol) S-conjugate amidase, it recycles conjugated MSH to the N-acetyl cysteine conjugate (AcCys S-conjugate, a mercapturic acid) and the MSH precursor. Involved in MSH-dependent detoxification of a number of alkylating agents and antibiotics. This Streptomyces coelicolor (strain ATCC BAA-471 / A3(2) / M145) protein is Mycothiol S-conjugate amidase.